Reading from the N-terminus, the 452-residue chain is AP-4 complex subunit mu-1 (452 aa).

An MHD domain is found at 184 to 451; it reads KNEVFLDVVE…LSHSDAYVIR (268 aa).

It belongs to the adaptor complexes medium subunit family. As to quaternary structure, adaptor protein complex 4 (AP-4) is a heterotetramer composed of two large adaptins (epsilon-type subunit AP4E1 and beta-type subunit AP4B1), a medium adaptin (mu-type subunit AP4M1) and a small adaptin (sigma-type AP4S1). Interacts with tyrosine-based sorting signals on the cytoplasmic tail of cargo proteins such as APP, ATG9A, LAMP2 and NAGPA. Interacts with the C-terminal domain of GRID2. Interacts with GRIA1 and GRIA2; the interaction is indirect via CACNG3. Interacts with CACNG3; CACNG3 associates GRIA1 and GRIA2 with the adaptor protein complex 4 (AP-4) to target them to the somatodendritic compartment of neurons. Interacts with HOOK1 and HOOK2; the interactions are direct, mediate the interaction between FTS-Hook-FHIP (FHF) complex and AP-4 and the perinuclear distribution of AP-4.

It is found in the golgi apparatus. The protein localises to the trans-Golgi network membrane. It localises to the early endosome. Its function is as follows. Component of the adaptor protein complex 4 (AP-4). Adaptor protein complexes are vesicle coat components involved both in vesicle formation and cargo selection. They control the vesicular transport of proteins in different trafficking pathways. AP-4 forms a non clathrin-associated coat on vesicles departing the trans-Golgi network (TGN) and may be involved in the targeting of proteins from the trans-Golgi network (TGN) to the endosomal-lysosomal system. It is also involved in protein sorting to the basolateral membrane in epithelial cells and the proper asymmetric localization of somatodendritic proteins in neurons. Within AP-4, the mu-type subunit AP4M1 is directly involved in the recognition and binding of tyrosine-based sorting signals found in the cytoplasmic part of cargos. The adaptor protein complex 4 (AP-4) may also recognize other types of sorting signal. The polypeptide is AP-4 complex subunit mu-1 (Canis lupus familiaris (Dog)).